The following is a 236-amino-acid chain: Protein YIPF6 (236 aa).

An N-acetylalanine modification is found at Ala-2. Residues 2–84 (AEAEDSPGEQ…HVLYPRKSNT (83 aa)) are Cytoplasmic-facing. Residue Ser-7 is modified to Phosphoserine. A helical transmembrane segment spans residues 85–105 (LLRDWDLWGPLILCVSLALML). Over 106-116 (QKSSVEGKRDG) the chain is Lumenal. A helical transmembrane segment spans residues 117 to 137 (GSPEFAEVFVIIWFGAVTITL). Topologically, residues 138-147 (NSKLLGGNIS) are cytoplasmic. The chain crosses the membrane as a helical span at residues 148–168 (FFQSLCVLGYCVLPLNIAMLI). Residues 169-185 (CRLLLLAGQGPINFMIR) lie on the Lumenal side of the membrane. A helical transmembrane segment spans residues 186–206 (LFVVLVMFAWSVIASTAFLAD). Residues 207-213 (CQPPNRK) are Cytoplasmic-facing. Residues 214–234 (ALAVYPVFLFYFVVSWMILTF) form a helical membrane-spanning segment. The Lumenal portion of the chain corresponds to 235-236 (TP).

This sequence belongs to the YIP1 family. Predominantly interacts with YIPF1 or YIPF2, but may also form a ternary complex with YIPF1 and YIPF2. This interaction may stabilize YIPF1 and YIPF2.

The protein localises to the golgi apparatus membrane. Its function is as follows. May be required for stable YIPF1 and YIPF2 protein expression. This is Protein YIPF6 (Yipf6) from Rattus norvegicus (Rat).